We begin with the raw amino-acid sequence, 602 residues long: Cholinesterase (602 aa).

The first 28 residues, 1–28 (MQSKGTIISIQFLLRFLLLWVLIGKSHT), serve as a signal peptide directing secretion. Asparagine 85 is a glycosylation site (N-linked (GlcNAc...) asparagine). The cysteines at positions 93 and 120 are disulfide-linked. The N-linked (GlcNAc...) asparagine glycan is linked to asparagine 134. 144–145 (GG) lines the substrate pocket. The active-site Acyl-ester intermediate is serine 226. Position 226 is a phosphoserine (serine 226). N-linked (GlcNAc...) asparagine glycosylation is found at asparagine 269 and asparagine 284. A disulfide bond links cysteine 280 and cysteine 291. The active-site Charge relay system is the glutamate 353. N-linked (GlcNAc...) asparagine glycosylation is present at asparagine 369. Cysteine 428 and cysteine 547 are oxidised to a cystine. Histidine 466 acts as the Charge relay system in catalysis. N-linked (GlcNAc...) asparagine glycosylation is found at asparagine 483, asparagine 509, asparagine 513, and asparagine 514.

This sequence belongs to the type-B carboxylesterase/lipase family. Homotetramer; disulfide-linked. Dimer of dimers.

The protein resides in the secreted. The catalysed reaction is an acylcholine + H2O = a carboxylate + choline + H(+). Esterase with broad substrate specificity. Contributes to the inactivation of the neurotransmitter acetylcholine. Can degrade neurotoxic organophosphate esters. This chain is Cholinesterase (BCHE), found in Felis catus (Cat).